We begin with the raw amino-acid sequence, 290 residues long: Phosphonopyruvate hydrolase (290 aa).

40-44 (WGSGF) is a binding site for substrate. Residue Asp54 is the Nucleophile of the active site. Asp81 is a binding site for Mg(2+). Positions 155, 186, and 188 each coordinate substrate.

Homodimer. Homotetramer. Requires Co(2+) as cofactor. Mg(2+) is required as a cofactor. Mn(2+) serves as cofactor.

The catalysed reaction is 3-phosphonopyruvate + H2O = pyruvate + phosphate + H(+). Partially inhibited by EDTA. Activity is restored by Co(2+), and to a lesser extent by Ni(2+) and Mg(2+). Unaffected by Cs(2+) and Ca(2+). Activity is reduced by Mn(2+) and Cu(2+). In terms of biological role, hydrolyzes phosphonopyruvate. Not active towards phosphoenolpyruvate, glycerophosphate, phospho-L-serine or phosphoglycolic acid. The protein is Phosphonopyruvate hydrolase of Variovorax sp. (strain Pal2).